The chain runs to 258 residues: (7aS)-7a-methyl-1,5-dioxo-2,3,5,6,7,7a-hexahydro-1H-indene-carboxyl-CoA hydrolase (258 aa).

This sequence belongs to the enoyl-CoA hydratase/isomerase family.

The catalysed reaction is (7aS)-7a-methyl-1,5-dioxo-2,3,5,6,7,7a-hexahydro-1H-indene-carboxyl-CoA + H2O = (3E)-2-(2-carboxylatoethyl)-3-methyl-6-oxocyclohex-1-ene-1-carboxyl-CoA + H(+). The protein operates within steroid metabolism; cholesterol degradation. Functionally, involved in the final steps of cholesterol and steroid degradation. Catalyzes the hydrolytic ring D opening of (7aS)-7a-methyl-1,5-dioxo-2,3,5,6,7,7a-hexahydro-1H-indene-carboxyl-CoA (HIEC-CoA) to (3E)-2-(2-carboxylatoethyl)-3-methyl-6-oxocyclohex-1-ene-1-carboxyl-CoA (COCHEA-CoA). The sequence is that of (7aS)-7a-methyl-1,5-dioxo-2,3,5,6,7,7a-hexahydro-1H-indene-carboxyl-CoA hydrolase from Rhodococcus jostii (strain RHA1).